Here is a 234-residue protein sequence, read N- to C-terminus: 2,3,4,5-tetrahydropyridine-2,6-dicarboxylate N-acetyltransferase (234 aa).

Belongs to the transferase hexapeptide repeat family. DapH subfamily.

The catalysed reaction is (S)-2,3,4,5-tetrahydrodipicolinate + acetyl-CoA + H2O = L-2-acetamido-6-oxoheptanedioate + CoA. Its pathway is amino-acid biosynthesis; L-lysine biosynthesis via DAP pathway; LL-2,6-diaminopimelate from (S)-tetrahydrodipicolinate (acetylase route): step 1/3. Its function is as follows. Catalyzes the transfer of an acetyl group from acetyl-CoA to tetrahydrodipicolinate. This chain is 2,3,4,5-tetrahydropyridine-2,6-dicarboxylate N-acetyltransferase, found in Lacticaseibacillus casei (strain BL23) (Lactobacillus casei).